Reading from the N-terminus, the 208-residue chain is MQFVAFERAKQGTGASRRLRISGKAPGIVYGGSAEPQLIEIDHNALWHALKKEAFHSSILDMELNGQVTKVLLRDVQYHPFKQQVLHVDFQRVDEKTRVHLKVPLHFEGVEGSQAVKVEGCTVTPLIHELDVMCMPAQLPEFIKVDLSGLTSKSTMGLQSVKLPHGVKAVVRGSNKNPALVSIKLPEVVADATAAAAPAAAPAKKGKK.

It belongs to the bacterial ribosomal protein bL25 family. CTC subfamily. As to quaternary structure, part of the 50S ribosomal subunit; part of the 5S rRNA/L5/L18/L25 subcomplex. Contacts the 5S rRNA. Binds to the 5S rRNA independently of L5 and L18.

Functionally, this is one of the proteins that binds to the 5S RNA in the ribosome where it forms part of the central protuberance. This is Large ribosomal subunit protein bL25 from Acidovorax ebreus (strain TPSY) (Diaphorobacter sp. (strain TPSY)).